A 269-amino-acid chain; its full sequence is Undecaprenyl-diphosphatase (269 aa).

The next 8 membrane-spanning stretches (helical) occupy residues 4–24, 50–70, 86–106, 113–133, 146–166, 186–206, 220–240, and 246–266; these read IELW…WLPI, LWLH…PYWL, LFAI…YKVL, ATGD…GLLL, VNVV…IPGI, AVWL…ALEL, WMVT…EVLL, and LDFS…PLAA.

Belongs to the UppP family.

It is found in the cell membrane. It carries out the reaction di-trans,octa-cis-undecaprenyl diphosphate + H2O = di-trans,octa-cis-undecaprenyl phosphate + phosphate + H(+). Its function is as follows. Catalyzes the dephosphorylation of undecaprenyl diphosphate (UPP). The polypeptide is Undecaprenyl-diphosphatase (Methanopyrus kandleri (strain AV19 / DSM 6324 / JCM 9639 / NBRC 100938)).